Consider the following 136-residue polypeptide: Interleukin-13 (136 aa).

Residues 1–18 (MALWLTVVIAFTCIGGLA) form the signal peptide. N38, N49, N57, N72, N75, and N131 each carry an N-linked (GlcNAc...) asparagine glycan. 2 disulfides stabilise this stretch: C48–C76 and C64–C90.

It belongs to the IL-4/IL-13 family. As to quaternary structure, interacts with IL13RA2.

The protein localises to the secreted. Functionally, cytokine that plays important roles in allergic inflammation and immune response to parasite infection. Synergizes with IL2 in regulating interferon-gamma synthesis. Stimulates B-cell proliferation, and activation of eosinophils, basophils, and mast cells. Plays an important role in controlling IL33 activity by modulating the production of transmembrane and soluble forms of interleukin-1 receptor-like 1/IL1RL1. Displays the capacity to antagonize Th1-driven proinflammatory immune response and downregulates synthesis of many proinflammatory cytokines including IL1, IL6, IL10, IL12 and TNF-alpha through a mechanism that partially involves suppression of NF-kappa-B. Also functions on nonhematopoietic cells, including endothelial cells where it induces vascular cell adhesion protein 1/VCAM1, which is important in the recruitment of eosinophils. Exerts its biological effects through its receptors which comprises the IL4R chain and the IL13RA1 chain, to activate JAK1 and TYK2, leading to the activation of STAT6. Aside from IL13RA1, another receptor IL13RA2 acts as a high affinity decoy for IL13 and mediates internalization and depletion of extracellular IL13. The polypeptide is Interleukin-13 (IL13) (Camelus bactrianus (Bactrian camel)).